The primary structure comprises 98 residues: snRNA-activating protein complex subunit 5 (98 aa).

Positions 73–82 are enriched in polar residues; sequence QTTLELSTKS. A disordered region spans residues 73–98; it reads QTTLELSTKSHVTEEEEEEEEEESDS. T85 bears the Phosphothreonine mark. The segment covering 86–98 has biased composition (acidic residues); it reads EEEEEEEEEESDS.

In terms of assembly, part of the SNAPc complex composed of 5 subunits: SNAPC1, SNAPC2, SNAPC3, SNAPC4 and SNAPC5. SNAPC5 interacts with SNAPC4.

Its subcellular location is the nucleus. In terms of biological role, part of the SNAPc complex required for the transcription of both RNA polymerase II and III small-nuclear RNA genes. Binds to the proximal sequence element (PSE), a non-TATA-box basal promoter element common to these 2 types of genes. Recruits TBP and BRF2 to the U6 snRNA TATA box. This chain is snRNA-activating protein complex subunit 5 (SNAPC5), found in Homo sapiens (Human).